The chain runs to 789 residues: Probable phosphoketolase 1 (789 aa).

It belongs to the XFP family. Thiamine diphosphate serves as cofactor.

This is Probable phosphoketolase 1 from Rhizobium meliloti (strain 1021) (Ensifer meliloti).